Reading from the N-terminus, the 378-residue chain is N-acetyldiaminopimelate deacetylase (378 aa).

Residue aspartate 65 is part of the active site. The active-site Proton acceptor is glutamate 124.

The protein belongs to the peptidase M20A family. N-acetyldiaminopimelate deacetylase subfamily.

It carries out the reaction N-acetyl-(2S,6S)-2,6-diaminopimelate + H2O = (2S,6S)-2,6-diaminopimelate + acetate. It participates in amino-acid biosynthesis; L-lysine biosynthesis via DAP pathway; LL-2,6-diaminopimelate from (S)-tetrahydrodipicolinate (acetylase route): step 3/3. Catalyzes the conversion of N-acetyl-diaminopimelate to diaminopimelate and acetate. In Anoxybacillus flavithermus (strain DSM 21510 / WK1), this protein is N-acetyldiaminopimelate deacetylase.